The following is an 89-amino-acid chain: Large ribosomal subunit protein bL27 (89 aa).

Residues 1 to 24 (MAHKKGTGSTRNGRDSNSKRLGVK) are disordered.

Belongs to the bacterial ribosomal protein bL27 family.

The sequence is that of Large ribosomal subunit protein bL27 from Synechococcus sp. (strain WH7803).